The sequence spans 264 residues: Thymidylate synthase (264 aa).

DUMP is bound at residue Arg21. Residue His51 participates in (6R)-5,10-methylene-5,6,7,8-tetrahydrofolate binding. 126-127 (RR) serves as a coordination point for dUMP. Catalysis depends on Cys146, which acts as the Nucleophile. Residues 166–169 (RSCD), Asn177, and 207–209 (HLY) each bind dUMP. Asp169 is a binding site for (6R)-5,10-methylene-5,6,7,8-tetrahydrofolate. Ala263 contributes to the (6R)-5,10-methylene-5,6,7,8-tetrahydrofolate binding site.

It belongs to the thymidylate synthase family. Bacterial-type ThyA subfamily. As to quaternary structure, homodimer.

It localises to the cytoplasm. The enzyme catalyses dUMP + (6R)-5,10-methylene-5,6,7,8-tetrahydrofolate = 7,8-dihydrofolate + dTMP. It participates in pyrimidine metabolism; dTTP biosynthesis. Functionally, catalyzes the reductive methylation of 2'-deoxyuridine-5'-monophosphate (dUMP) to 2'-deoxythymidine-5'-monophosphate (dTMP) while utilizing 5,10-methylenetetrahydrofolate (mTHF) as the methyl donor and reductant in the reaction, yielding dihydrofolate (DHF) as a by-product. This enzymatic reaction provides an intracellular de novo source of dTMP, an essential precursor for DNA biosynthesis. This Edwardsiella ictaluri (strain 93-146) protein is Thymidylate synthase.